Consider the following 1161-residue polypeptide: Perforin-like protein 1 (1161 aa).

Residues 67–86 (LWITFVCLLTLHMFGLSSAV) traverse the membrane as a helical segment. Residues 154 to 329 (PEALNEVPTK…LGDSSALDLF (176 aa)) form a disordered region. 2 stretches are compositionally biased toward basic and acidic residues: residues 162–177 (TKVE…DKTE) and 184–194 (ADHKSLLEGRS). Residues 201 to 211 (PDDDFDFLFED) show a composition bias toward acidic residues. Positions 222–234 (NKGTSSDETSPGD) are enriched in polar residues. Over residues 238-249 (GEGSSASDSLLS) the composition is skewed to low complexity. An N-linked (GlcNAc...) asparagine glycan is attached at Asn-257. A compositionally biased stretch (basic residues) spans 264-283 (NQKRITHPKSKAQHQKKVTK). Over residues 309–322 (NTQADDSQRQSLGD) the composition is skewed to polar residues. Asn-344 carries N-linked (GlcNAc...) asparagine glycosylation. A disordered region spans residues 353-381 (AANDGGLFSSSGMGPTGASDETSANPLGS). Residues 361–378 (SSSGMGPTGASDETSANP) show a composition bias toward polar residues. Residues 463–817 (LSAVYTKATK…LTPQDLSALT (355 aa)) form the MACPF domain. Residues Cys-539 and Cys-602 are joined by a disulfide bond. N-linked (GlcNAc...) asparagine glycosylation is present at Asn-550. A beta stranded membrane pass occupies residues 554 to 589 (YQNELSVDASLQGGDPIGLNSFSASTGYRDFAKEVS). An N-linked (GlcNAc...) asparagine glycan is attached at Asn-618. Residues Cys-643 and Cys-657 are joined by a disulfide bond. The beta stranded transmembrane segment at 694–740 (RSEVEKMRNMGIDVKTQLKMQLGGVSGGAGQGTSSKKNQSSSEYQMN) threads the bilayer. The interval 716–736 (GGVSGGAGQGTSSKKNQSSSE) is disordered. N-linked (GlcNAc...) asparagine glycosylation occurs at Asn-755. 6 disulfides stabilise this stretch: Cys-845–Cys-900, Cys-874–Cys-881, Cys-928–Cys-981, Cys-957–Cys-964, Cys-1019–Cys-1080, and Cys-1047–Cys-1054. Asn-1022, Asn-1050, and Asn-1111 each carry an N-linked (GlcNAc...) asparagine glycan. Residues 1094–1149 (VGKAKGNGKKKKGKKGKNKTNAPNEVEEGQQLGADSPSQVSVPADADSGPTSKTMS) are disordered. Positions 1099–1111 (GNGKKKKGKKGKN) are enriched in basic residues.

This sequence belongs to the MPEG1 family. In terms of assembly, homooligomer; forms a homooligomeric pore.

It localises to the parasitophorous vacuole membrane. The protein resides in the cytoplasmic vesicle. Its subcellular location is the secretory vesicle. The protein localises to the microneme membrane. Pore-forming protein that promotes parasite exit from host cells: mediates formation of a pore in the parasitophorous vacuolar membrane, leading to membrane permeabilization, thereby facilitating parasite egress from host cells. May also form a pore in the host plasma membrane. Preferentially binds inner leaflet lipids, such as phosphatidylethanolamine (PE) or phosphatidylserine (PS). In Toxoplasma gondii (strain ATCC 50861 / VEG), this protein is Perforin-like protein 1.